The chain runs to 259 residues: Ovulation prohormone (259 aa).

An N-terminal signal peptide occupies residues 1–34 (MKMSGLLSKPDYGVVGIVFTVVFCCWCSSSTTHA). A propeptide spanning residues 35-102 (LSIAEPGRDR…SGEKTRLTAA (68 aa)) is cleaved from the precursor. The segment at 42–103 (RDRYDKRSPT…GEKTRLTAAK (62 aa)) is disordered. 2 repeats span residues 119 to 123 (RLRFH) and 146 to 150 (RLRFH). Residues 119 to 150 (RLRFHKRRVDSADESNDDGFDRKAREPRLRFH) are 2 X 5 AA repeats of R-L-R-F-H. Positions 149-197 (FHDVRKRSATAEEGSENAEIEESHLGNSRSRRSAGSAPSSANEVQRSKR) are disordered. Positions 181–195 (SAGSAPSSANEVQRS) are excised as a propeptide. Leucine amide is present on leucine 233. Residues 237–259 (GSAFFDHIPIIFGEPQYDYQPFK) constitute a propeptide that is removed on maturation.

It belongs to the molluscan ELH family.

The protein resides in the secreted. In terms of biological role, CDCH induces ovulation and egg-mass production; it may also stimulate synthesis of secretory products in the female accessory sex glands and affect neurons in the neuronal circuits controlling locomotion and feeding. Functionally, calfluxin is involved in the influx of calcium into mitochondria of the albumen gland. CDCA (or alpha-CDCP) triggers the electrical activity of the caudodorsal cells (CDCS). This is Ovulation prohormone from Lymnaea stagnalis (Great pond snail).